Here is a 155-residue protein sequence, read N- to C-terminus: Microsomal glutathione S-transferase 1 (155 aa).

The Lumenal portion of the chain corresponds to 3–9 (NLSQLME). Residues 10-33 (NEVFMAFASYTTIVLSKMNFMSTA) form a helical membrane-spanning segment. Over 34–62 (TAFYRLTKKVFANPEDCAGFGKGENAKKY) the chain is Cytoplasmic. Glutathione is bound at residue Arg-38. N6-acetyllysine is present on residues Lys-42, Lys-55, and Lys-60. A helical membrane pass occupies residues 63 to 96 (LRTDDRVERVRRAHLNDLENIVPFLGIGLLYSLS). Residues Arg-73, Arg-74, His-76, and Glu-81 each coordinate glutathione. At 97-99 (GPD) the chain is on the lumenal side. A helical transmembrane segment spans residues 100–123 (LSTAILHFRLFVRARIYHTIAYLT). Tyr-121 is a binding site for glutathione. Residues 124-128 (PLPQP) lie on the Cytoplasmic side of the membrane. The helical transmembrane segment at 129–148 (NRALAFFIGYGVTLSMAYRL) threads the bilayer. Topologically, residues 149–155 (LKSKLYL) are lumenal.

It belongs to the MAPEG family. Homotrimer; The trimer binds only one molecule of glutathione.

It localises to the endoplasmic reticulum membrane. The protein localises to the mitochondrion outer membrane. The enzyme catalyses RX + glutathione = an S-substituted glutathione + a halide anion + H(+). In terms of biological role, conjugation of reduced glutathione to a wide number of exogenous and endogenous hydrophobic electrophiles. The protein is Microsomal glutathione S-transferase 1 (MGST1) of Bos taurus (Bovine).